The chain runs to 330 residues: Methionyl-tRNA formyltransferase (330 aa).

121-124 contacts (6S)-5,6,7,8-tetrahydrofolate; the sequence is SLLP.

It belongs to the Fmt family.

The catalysed reaction is L-methionyl-tRNA(fMet) + (6R)-10-formyltetrahydrofolate = N-formyl-L-methionyl-tRNA(fMet) + (6S)-5,6,7,8-tetrahydrofolate + H(+). In terms of biological role, attaches a formyl group to the free amino group of methionyl-tRNA(fMet). The formyl group appears to play a dual role in the initiator identity of N-formylmethionyl-tRNA by promoting its recognition by IF2 and preventing the misappropriation of this tRNA by the elongation apparatus. This is Methionyl-tRNA formyltransferase from Burkholderia cenocepacia (strain HI2424).